The chain runs to 469 residues: Rubisco accumulation factor 1, chloroplastic (469 aa).

Residues 1–46 (MLSLSHPHPHPASTTAAAAARHHHRRNAPFAPHHRRRRRFAHLTTS) constitute a chloroplast transit peptide. Residues 1–78 (MLSLSHPHPH…TPPPTAPPDQ (78 aa)) are disordered. The segment covering 20 to 41 (ARHHHRRNAPFAPHHRRRRRFA) has biased composition (basic residues). The tract at residues 90 to 281 (LPDKYKDLDL…PARARVEAEL (192 aa)) is N-terminal alpha-helix. Positions 246–294 (RQSREAIDAEDSVAELERALEVVDTEPARARVEAELDRARRKAAGEEVD) form a coiled coil. Residues 311 to 456 (VPVVRLMYGE…AEVLVVVRPP (146 aa)) form a C-terminal beta sheet region.

It belongs to the RAF family.

It is found in the plastid. It localises to the chloroplast. Its function is as follows. Required for assembly or stability of RuBisCO. Acts at a postchaperonin step to fold and/or assemble the large subunit (LS) into RuBisCO. This chain is Rubisco accumulation factor 1, chloroplastic (RAF1), found in Oryza sativa subsp. japonica (Rice).